The chain runs to 92 residues: Large ribosomal subunit protein bL25 (92 aa).

This sequence belongs to the bacterial ribosomal protein bL25 family. As to quaternary structure, part of the 50S ribosomal subunit; part of the 5S rRNA/L5/L18/L25 subcomplex. Contacts the 5S rRNA. Binds to the 5S rRNA independently of L5 and L18.

In terms of biological role, this is one of the proteins that binds to the 5S RNA in the ribosome where it forms part of the central protuberance. This Photobacterium profundum (strain SS9) protein is Large ribosomal subunit protein bL25.